Consider the following 334-residue polypeptide: Fructose-1,6-bisphosphatase class 1 (334 aa).

Residues E90, D113, L115, and D116 each coordinate Mg(2+). Substrate-binding positions include 116–119 (DGSS), N209, Y242, and K272. E278 serves as a coordination point for Mg(2+).

It belongs to the FBPase class 1 family. In terms of assembly, homotetramer. Mg(2+) is required as a cofactor.

The protein localises to the cytoplasm. The catalysed reaction is beta-D-fructose 1,6-bisphosphate + H2O = beta-D-fructose 6-phosphate + phosphate. It functions in the pathway carbohydrate biosynthesis; gluconeogenesis. This chain is Fructose-1,6-bisphosphatase class 1, found in Actinobacillus pleuropneumoniae serotype 7 (strain AP76).